We begin with the raw amino-acid sequence, 109 residues long: Small ribosomal subunit protein bS6 (109 aa).

It belongs to the bacterial ribosomal protein bS6 family.

In terms of biological role, binds together with bS18 to 16S ribosomal RNA. The polypeptide is Small ribosomal subunit protein bS6 (Anaplasma phagocytophilum (strain HZ)).